The sequence spans 454 residues: Exodeoxyribonuclease 7 large subunit (454 aa).

Residues 337–352 (ANQRQQRASQRLRQQN) show a composition bias toward low complexity. A disordered region spans residues 337–359 (ANQRQQRASQRLRQQNPQPRIHR).

Belongs to the XseA family. In terms of assembly, heterooligomer composed of large and small subunits.

The protein localises to the cytoplasm. It catalyses the reaction Exonucleolytic cleavage in either 5'- to 3'- or 3'- to 5'-direction to yield nucleoside 5'-phosphates.. In terms of biological role, bidirectionally degrades single-stranded DNA into large acid-insoluble oligonucleotides, which are then degraded further into small acid-soluble oligonucleotides. The chain is Exodeoxyribonuclease 7 large subunit from Salmonella arizonae (strain ATCC BAA-731 / CDC346-86 / RSK2980).